The sequence spans 322 residues: Pyrroline-5-carboxylate reductase (322 aa).

2 helical membrane passes run 9 to 29 and 117 to 137; these read YPNVAILGCGKLGQALLVGLL and ILISLMGGVSPGLIVEALHFW. The tract at residues 302-322 is disordered; it reads LSQSAGSHGEDNTTDSKTSRA. Asparagine 313 carries an N-linked (GlcNAc...) asparagine glycan.

It belongs to the pyrroline-5-carboxylate reductase family.

Its subcellular location is the membrane. It catalyses the reaction L-proline + NADP(+) = (S)-1-pyrroline-5-carboxylate + NADPH + 2 H(+). The catalysed reaction is L-proline + NAD(+) = (S)-1-pyrroline-5-carboxylate + NADH + 2 H(+). The protein operates within alkaloid biosynthesis. Pyrroline-5-carboxylate reductase; part of the gene cluster that mediates the biosynthesis of paraherquamide, a fungal indole alkaloid that belongs to a family of natural products containing a characteristic bicyclo[2.2.2]diazaoctane core. The first steps in the biosynthesis of paraherquamide is the production of the beta-methyl-proline precursor from L-isoleucine. They require oxidation of a terminally hydroxylated L-isoleucine to the corresponding aldehyde by enzymes which have still to be identified. Spontaneous cyclization and dehydration would yield the 4-methyl pyrolline-5-carboxylic acid, which is then reduced by the pyrroline-5-carboxylate reductase phqD leading to the beta-methyl-proline precursor. The next step of paraherquamide biosynthesis involves coupling of beta-methyl-proline and L-tryptophan by the bimodular NRPS phqB, to produce a monooxopiperazine intermediate. The reductase (R) domain of phqB utilizes NADPH for hydride transfer to reduce the thioester bond of the T domain-tethered linear dipeptide to a hemithioaminal intermediate, which spontaneously cleaves the C-S bond to release the aldehyde product. This compound undergoes spontaneous cyclization and dehydration to give a dienamine which is reverse prenylated at C-2 by the reverse prenyltransferase phqJ. The other prenyltransferase present in the cluster, phqI may be a redundant gene in the pathway. During biosynthetic assembly, the key step to produce the polycyclic core is catalyzed by the bifunctional reductase and intramolecular [4+2] Diels-Alderase, phqE, resulting in formation of the [2.2.2] diazaoctane intermediate preparaherquamide. Following formation of preparaherquamide, an indole 2,3-epoxidation-initiated pinacol-like rearrangement is catalyzed by the phqK FAD-dependent monooxygenase. The prenyltransferase phqA, the cytochrome P450 monooxygenase phqL, and the FAD-linked oxidoreductase phqH (or the cytochrome P450 monooxygenase phqM), are proposed to be involved in the formation of the pyran ring. The FAD-dependent monooxygenase phqK is likely responsible for generation of the spiro-oxindole, and the N-methylation is likely mediated by the phqN methyltransferase leading to the isolable natural product paraherquamide F. However, the order of these biosynthetic steps has still to be determined. In late-stage paraherquamide biosynthesis, the third P450 monooxygenase, phqO, is probably responsible for the C-14 hydroxylation, transforming paraherquamide F to paraherquamide G, and paraherquamide E to the final product paraherquamide A. The expansion from the 6-membered ring pyran (in paraherquamides F and G) to the 7-membered dioxepin ring (in paraherquamides A and E) represents a poorly understood but intriguing process that probably involves the 2-oxoglutarate-dependent dioxygenase phqC. Finally, the remaining members of the paraherquamide cluster, including phqI as well as phqM (or phqH), do not have a clearly prescribed role and appear to be redundant. The protein is Pyrroline-5-carboxylate reductase of Penicillium fellutanum.